A 544-amino-acid chain; its full sequence is Putative ligase Rv1013 (544 aa).

Residue K528 forms an Isoglutamyl lysine isopeptide (Lys-Gln) (interchain with Q-Cter in protein Pup) linkage.

This sequence belongs to the ATP-dependent AMP-binding enzyme family. Pupylated at Lys-528 by the prokaryotic ubiquitin-like protein Pup, which probably leads to its degradation by the proteasome.

The polypeptide is Putative ligase Rv1013 (pks16) (Mycobacterium tuberculosis (strain ATCC 25618 / H37Rv)).